A 354-amino-acid polypeptide reads, in one-letter code: UDP-3-O-acylglucosamine N-acyltransferase (354 aa).

Histidine 250 functions as the Proton acceptor in the catalytic mechanism.

The protein belongs to the transferase hexapeptide repeat family. LpxD subfamily. In terms of assembly, homotrimer.

It catalyses the reaction a UDP-3-O-[(3R)-3-hydroxyacyl]-alpha-D-glucosamine + a (3R)-hydroxyacyl-[ACP] = a UDP-2-N,3-O-bis[(3R)-3-hydroxyacyl]-alpha-D-glucosamine + holo-[ACP] + H(+). It participates in bacterial outer membrane biogenesis; LPS lipid A biosynthesis. Its function is as follows. Catalyzes the N-acylation of UDP-3-O-acylglucosamine using 3-hydroxyacyl-ACP as the acyl donor. Is involved in the biosynthesis of lipid A, a phosphorylated glycolipid that anchors the lipopolysaccharide to the outer membrane of the cell. In Methylococcus capsulatus (strain ATCC 33009 / NCIMB 11132 / Bath), this protein is UDP-3-O-acylglucosamine N-acyltransferase.